A 482-amino-acid chain; its full sequence is Lipoamide acyltransferase component of branched-chain alpha-keto acid dehydrogenase complex, mitochondrial (482 aa).

A mitochondrion-targeting transit peptide spans 1–61; that stretch reads MAAARVLRTW…HSLRTAAVLQ (61 aa). Residues 64 to 139 enclose the Lipoyl-binding domain; it reads VVQFKLSDIG…YVGKPLIDIE (76 aa). K105 carries the N6-lipoyllysine modification. N6-succinyllysine is present on K133. Residues 145-160 form a critical for association with PPM1K region; that stretch reads DSEEDVVETPAVSHDE. Positions 172–209 constitute a Peripheral subunit-binding (PSBD) domain; sequence LATPAVRRLAMENNIKLSEVVGSGKDGRILKEDILSFL. K196 carries the post-translational modification N6-acetyllysine; alternate. The residue at position 196 (K196) is an N6-succinyllysine; alternate. K202 is modified (N6-acetyllysine). Residues 217 to 252 form a disordered region; that stretch reads LPPSPKSEITPPPPQPKDRTFPTPIAKPPVFTGKDR. Residues 218 to 231 are compositionally biased toward pro residues; it reads PPSPKSEITPPPPQ. S220 bears the Phosphoserine mark. N6-acetyllysine occurs at positions 243 and 250. K261 is subject to N6-succinyllysine. Position 289 is an N6-acetyllysine; alternate (K289). At K289 the chain carries N6-succinyllysine; alternate. Residue R291 participates in CoA binding. N6-acetyllysine is present on residues K295 and K304. CoA-binding residues include S306, D349, Q378, S399, N400, S403, G424, and I426. At K435 the chain carries N6-acetyllysine. K440 carries the N6-acetyllysine; alternate modification. K440 is subject to N6-succinyllysine; alternate. Catalysis depends on residues H452 and D456.

Belongs to the 2-oxoacid dehydrogenase family. In terms of assembly, forms a 24-polypeptide structural core with octahedral symmetry that represents the E2 component of the branched-chain alpha-ketoacid dehydrogenase (BCKDH) complex. The BCKDH complex is composed of three major building blocks E1, E2 and E3. It is organized around E2, a 24-meric cubic core composed of DBT, to which are associated 6 to 12 copies of E1, and approximately 6 copies of the dehydrogenase E3, a DLD dimer. Interacts with PPM1K with a 24:1 stoichiometry; the N-terminal region (residues 49-61) of PPM1K and C-terminal linker of the lipoyl domain of DBT/E2 (residues 145-160) are critical for this interaction whereas the lipoyl prosthetic group is dispensable. This interaction requires colocalization in mitochondria. PPM1K competes with BCKDK for binding to DBT; this interaction is modulated by branched-chain alpha-keto acids (BCKAs). At steady state, BCKDH holoenzyme preferentially binds BCKDK and BCKDHA is phosphorylated. In response to high levels of BCKAs, BCKDK is replaced by PPM1K leading to BCKDHA dephosphorylation. (R)-lipoate is required as a cofactor.

It localises to the mitochondrion matrix. It carries out the reaction N(6)-[(R)-dihydrolipoyl]-L-lysyl-[protein] + 2-methylpropanoyl-CoA = N(6)-[(R)-S(8)-2-methylpropanoyldihydrolipoyl]-L-lysyl-[protein] + CoA. In terms of biological role, the branched-chain alpha-keto dehydrogenase complex catalyzes the overall conversion of alpha-keto acids to acyl-CoA and CO(2). It contains multiple copies of three enzymatic components: branched-chain alpha-keto acid decarboxylase (E1), lipoamide acyltransferase (E2) and lipoamide dehydrogenase (E3). Within this complex, the catalytic function of this enzyme is to accept, and to transfer to coenzyme A, acyl groups that are generated by the branched-chain alpha-keto acid decarboxylase component. The polypeptide is Lipoamide acyltransferase component of branched-chain alpha-keto acid dehydrogenase complex, mitochondrial (Dbt) (Mus musculus (Mouse)).